The primary structure comprises 74 residues: Conotoxin TsMLCL-04 (74 aa).

A signal peptide spans 1–19; it reads MLCLPVFIILLLLASPAAP. The propeptide occupies 20–60; that stretch reads NPLETRIQRDLIRAALEDADMKTNERFLEGVISTIKDFAGK.

The protein belongs to the conotoxin T superfamily. Contains 2 disulfide bonds that can be either 'C1-C3, C2-C4' or 'C1-C4, C2-C3', since these disulfide connectivities have been observed for conotoxins with cysteine framework V (for examples, see AC P0DQQ7 and AC P81755). As to expression, expressed by the venom duct.

The protein resides in the secreted. The protein is Conotoxin TsMLCL-04 of Conus tessulatus (Tessellate cone).